A 338-amino-acid polypeptide reads, in one-letter code: Oligopeptide transport ATP-binding protein OppD (338 aa).

The region spanning 7–257 is the ABC transporter domain; it reads LEAKQVSVAF…PKHPYTRSLL (251 aa). Residue 43–50 coordinates ATP; sequence GESGSGKS.

The protein belongs to the ABC transporter superfamily. As to quaternary structure, the complex is composed of two ATP-binding proteins (OppD and OppF), two transmembrane proteins (OppB and OppC) and a solute-binding protein (OppA).

The protein localises to the cell membrane. It carries out the reaction a [peptide](out) + ATP + H2O = a [peptide](in) + ADP + phosphate + H(+). In terms of biological role, part of the ABC transporter complex OppABCDF involved in the uptake of oligopeptides. Probably responsible for energy coupling to the transport system. Essential for uptake of peptides larger than three amino acids and for growth in milk. This Lactococcus lactis subsp. cremoris (strain SK11) protein is Oligopeptide transport ATP-binding protein OppD.